We begin with the raw amino-acid sequence, 367 residues long: Voltage-gated potassium channel subunit beta-2 (367 aa).

T56, W57, Q63, and D85 together coordinate NADP(+). Catalysis depends on Y90, which acts as the Proton donor/acceptor. Residues N158, S188, R189, Q214, W243, S244, P245, L246, A247, C248, K254, Y262, R264, G323, S325, Q329, E332, and N333 each contribute to the NADP(+) site.

This sequence belongs to the shaker potassium channel beta subunit family. Forms heteromultimeric complex with alpha subunits.

The protein resides in the cytoplasm. The protein localises to the membrane. It is found in the cell membrane. Its subcellular location is the cell projection. It localises to the axon. The protein resides in the synapse. The protein localises to the synaptosome. It is found in the cytoskeleton. In terms of biological role, regulatory subunit of the voltage-gated potassium (Kv) Shaker channels composed of pore-forming and potassium-conducting alpha subunits and of regulatory beta subunits. The beta-2/KCNAB2 cytoplasmic subunit may promote potassium channel closure via a mechanism that does not involve physical obstruction of the channel pore. Enhances current amplitude of Kv1.1/KCNA1 and Kv2.2/KCNA2 channels. May display nicotinamide adenine dinucleotide phosphate (NADPH)-dependent aldoketoreductase activity by catalyzing the NADPH-dependent reduction of a wide range of aldehyde and ketone substrates. The binding of oxidized and reduced nucleotide may alter Kv channel gating and contribute to dynamic fine tuning of cell excitability. The sequence is that of Voltage-gated potassium channel subunit beta-2 (kcnab2) from Xenopus laevis (African clawed frog).